A 213-amino-acid chain; its full sequence is Kynurenine formamidase (213 aa).

Trp-20 serves as a coordination point for substrate. Zn(2+) contacts are provided by His-50, His-54, and Asp-56. The active-site Proton donor/acceptor is His-60. Positions 161 and 173 each coordinate Zn(2+).

It belongs to the Cyclase 1 superfamily. KynB family. As to quaternary structure, homodimer. Zn(2+) is required as a cofactor.

The enzyme catalyses N-formyl-L-kynurenine + H2O = L-kynurenine + formate + H(+). It participates in amino-acid degradation; L-tryptophan degradation via kynurenine pathway; L-kynurenine from L-tryptophan: step 2/2. Functionally, catalyzes the hydrolysis of N-formyl-L-kynurenine to L-kynurenine, the second step in the kynurenine pathway of tryptophan degradation. The chain is Kynurenine formamidase from Pseudomonas aeruginosa (strain ATCC 15692 / DSM 22644 / CIP 104116 / JCM 14847 / LMG 12228 / 1C / PRS 101 / PAO1).